The sequence spans 838 residues: MAKRLVLFVAVVVALVALTVAEGEASEQLQCERELQELQERELKACQQVMDQQLRDISPECHPVVVSPVAGQYEQQIVVPKGGSFYPGETTPPQQLQQRIFWGIPALLKRYYPSVTSPQQVSYYPGQASPQRPGQGQQPGQGQQSGQGQQGYYPTSPQQPGQWQQPEQGQPGYYPTSPQQPGQLQQPAQGQQPGQGQQGRQPGQGQPGYYPTSSQLQPGQLQQPAQGQQGQQPGQGQQGQQPGQGQQPGQGQQGQQPGQGQQPGQGQQGQQLGQGQQGYYPTSLQQSGQGQPGYYPTSLQQLGQGQSGYYPTSPQQPGQGQQPGQLQQPAQGQQPEQGQQGQQPGQGQQGQQPGQGQQPGQGQPGYYPTSPQQSGQGQPGYYPTSSQQPTQSQQPGQGQQGQQVGQGQQAQQPGQGQQPGQGQPGYYPTSPLQSGQGQPGYYLTSPQQSGQGQQPGQLQQSAQGQKGQQPGQGQQPGQGQQGQQPGQGQQGQQPGQGQPGYYPTSPQQSGQGQQPGQWQQPGQGQPGYYPTSPLQPGQGQPGYDPTSPQQPGQGQQPGQLQQPAQGQQGQQLAQGQQGQQPAQVQQGQQPAQGQQGQQLGQGQQGQQPGQGQQPAQGQQGQQPGQGQQGQQPGQGQQPGQGQPWYYPTSPQESGQGQQPGQWQQPGQWQQPGQGQPGYYLTSPLQLGQGQQGYYPTSLQQPGQGQQPGQWQQSGQGQHGYYPTSPQLSGQGQRPGQWLQPGQGQQGYYPTSPQQSGQGQQLGQWLQPGQGQQGYYPTSLQQTGQGQQSGQGQQGYYSSYHVSVEHQAASLKVAKAQQLAAQLPAMCRLEGGDALSASQ.

Positions 1–21 (MAKRLVLFVAVVVALVALTVA) are cleaved as a signal peptide. Residues 122–794 (SYYPGQASPQ…GQQSGQGQQG (673 aa)) are disordered. Over residues 125 to 136 (PGQASPQRPGQG) the composition is skewed to low complexity. Gly residues predominate over residues 137–149 (QQPGQGQQSGQGQ). Low complexity-rich tracts occupy residues 150-172 (QGYYPTSPQQPGQWQQPEQGQPG), 179-208 (QQPGQLQQPAQGQQPGQGQQGRQPGQGQPG), 215-245 (QLQPGQLQQPAQGQQGQQPGQGQQGQQPGQG), 268-308 (QGQQ…GQSG), 315-356 (QQPG…PGQG), 364-416 (PGYY…PGQG), 445-473 (SPQQSGQGQQPGQLQQSAQGQKGQQPGQG), 481-532 (QGQQ…YPTS), 549-643 (QQPG…QGQP), 654-677 (GQGQQPGQWQQPGQWQQPGQGQPG), 699-719 (QQPGQGQQPGQWQQSGQGQHG), and 729-773 (GQGQ…GQQG).

The protein belongs to the gliadin/glutenin family. In terms of assembly, disulfide-bridge linked aggregates.

Glutenins are high-molecular weight seed storage proteins of wheat endosperm. Thought to be responsible for the visco-elastic property of wheat dough. This chain is Glutenin, high molecular weight subunit PW212, found in Triticum aestivum (Wheat).